The primary structure comprises 156 residues: ATP synthase subunit b (156 aa).

The chain crosses the membrane as a helical span at residues 3 to 23 (ITLTIFAQALAFAGLIWIVAT).

This sequence belongs to the ATPase B chain family. F-type ATPases have 2 components, F(1) - the catalytic core - and F(0) - the membrane proton channel. F(1) has five subunits: alpha(3), beta(3), gamma(1), delta(1), epsilon(1). F(0) has three main subunits: a(1), b(2) and c(10-14). The alpha and beta chains form an alternating ring which encloses part of the gamma chain. F(1) is attached to F(0) by a central stalk formed by the gamma and epsilon chains, while a peripheral stalk is formed by the delta and b chains.

It is found in the cell inner membrane. F(1)F(0) ATP synthase produces ATP from ADP in the presence of a proton or sodium gradient. F-type ATPases consist of two structural domains, F(1) containing the extramembraneous catalytic core and F(0) containing the membrane proton channel, linked together by a central stalk and a peripheral stalk. During catalysis, ATP synthesis in the catalytic domain of F(1) is coupled via a rotary mechanism of the central stalk subunits to proton translocation. Its function is as follows. Component of the F(0) channel, it forms part of the peripheral stalk, linking F(1) to F(0). The protein is ATP synthase subunit b of Xanthomonas oryzae pv. oryzae (strain MAFF 311018).